The following is a 262-amino-acid chain: Type III pantothenate kinase (262 aa).

12 to 19 contacts ATP; the sequence is DIGNTSIA. Substrate-binding positions include Tyr-94 and 109–112; that span reads GSDV. The Proton acceptor role is filled by Asp-111. Asp-132 serves as a coordination point for K(+). Thr-135 is a binding site for ATP. A substrate-binding site is contributed by Thr-187.

Belongs to the type III pantothenate kinase family. Homodimer. Requires NH4(+) as cofactor. It depends on K(+) as a cofactor.

It is found in the cytoplasm. The catalysed reaction is (R)-pantothenate + ATP = (R)-4'-phosphopantothenate + ADP + H(+). Its pathway is cofactor biosynthesis; coenzyme A biosynthesis; CoA from (R)-pantothenate: step 1/5. Its function is as follows. Catalyzes the phosphorylation of pantothenate (Pan), the first step in CoA biosynthesis. This is Type III pantothenate kinase from Borreliella burgdorferi (strain ATCC 35210 / DSM 4680 / CIP 102532 / B31) (Borrelia burgdorferi).